The chain runs to 89 residues: UPF0223 protein BCB4264_A4064 (89 aa).

Belongs to the UPF0223 family.

The sequence is that of UPF0223 protein BCB4264_A4064 from Bacillus cereus (strain B4264).